The chain runs to 503 residues: Probable cytosol aminopeptidase (503 aa).

Mn(2+)-binding residues include Lys272 and Asp277. The active site involves Lys284. Residues Asp295, Asp354, and Glu356 each contribute to the Mn(2+) site. The active site involves Arg358.

This sequence belongs to the peptidase M17 family. Mn(2+) serves as cofactor.

The protein resides in the cytoplasm. It carries out the reaction Release of an N-terminal amino acid, Xaa-|-Yaa-, in which Xaa is preferably Leu, but may be other amino acids including Pro although not Arg or Lys, and Yaa may be Pro. Amino acid amides and methyl esters are also readily hydrolyzed, but rates on arylamides are exceedingly low.. It catalyses the reaction Release of an N-terminal amino acid, preferentially leucine, but not glutamic or aspartic acids.. In terms of biological role, presumably involved in the processing and regular turnover of intracellular proteins. Catalyzes the removal of unsubstituted N-terminal amino acids from various peptides. The protein is Probable cytosol aminopeptidase of Chlorobium limicola (strain DSM 245 / NBRC 103803 / 6330).